The following is a 112-amino-acid chain: MYB-like transcription factor ETC2 (112 aa).

The 38-residue stretch at 41–78 (TEQEEDLISRMYRLVGNRWDLIAGRVVGRKANEIERYW) folds into the Myb-like domain.

Interacts with GL3. As to expression, expressed in stomatal guard mother cells, young stomata and trichomes of young leaves, and inflorescences.

The protein localises to the nucleus. MYB-type transcription factor involved in epidermal cell fate specification. Acts as a negative regulator of trichome development, by mediating lateral inhibition. Promotes the formation of hair developing cells in H position in root epidermis, probably by inhibiting non-hair cell formation. This is MYB-like transcription factor ETC2 (ETC2) from Arabidopsis thaliana (Mouse-ear cress).